Reading from the N-terminus, the 418-residue chain is Gamma-glutamyl phosphate reductase (418 aa).

This sequence belongs to the gamma-glutamyl phosphate reductase family.

It localises to the cytoplasm. It catalyses the reaction L-glutamate 5-semialdehyde + phosphate + NADP(+) = L-glutamyl 5-phosphate + NADPH + H(+). The protein operates within amino-acid biosynthesis; L-proline biosynthesis; L-glutamate 5-semialdehyde from L-glutamate: step 2/2. Its function is as follows. Catalyzes the NADPH-dependent reduction of L-glutamate 5-phosphate into L-glutamate 5-semialdehyde and phosphate. The product spontaneously undergoes cyclization to form 1-pyrroline-5-carboxylate. This chain is Gamma-glutamyl phosphate reductase, found in Desulfatibacillum aliphaticivorans.